Reading from the N-terminus, the 262-residue chain is Acyl-[acyl-carrier-protein]--UDP-N-acetylglucosamine O-acyltransferase (262 aa).

It belongs to the transferase hexapeptide repeat family. LpxA subfamily. In terms of assembly, homotrimer.

The protein localises to the cytoplasm. It catalyses the reaction a (3R)-hydroxyacyl-[ACP] + UDP-N-acetyl-alpha-D-glucosamine = a UDP-3-O-[(3R)-3-hydroxyacyl]-N-acetyl-alpha-D-glucosamine + holo-[ACP]. Its pathway is glycolipid biosynthesis; lipid IV(A) biosynthesis; lipid IV(A) from (3R)-3-hydroxytetradecanoyl-[acyl-carrier-protein] and UDP-N-acetyl-alpha-D-glucosamine: step 1/6. In terms of biological role, involved in the biosynthesis of lipid A, a phosphorylated glycolipid that anchors the lipopolysaccharide to the outer membrane of the cell. The protein is Acyl-[acyl-carrier-protein]--UDP-N-acetylglucosamine O-acyltransferase of Sodalis glossinidius (strain morsitans).